A 507-amino-acid chain; its full sequence is Myocyte-specific enhancer factor 2A (507 aa).

One can recognise an MADS-box domain in the interval 3–57 (RKKIQITRIMDERNRQVTFTKRKFGLMKKAYELSVLCDCEIALIIFNSSNKLFQY). Residues 58–86 (ASTDMDKVLLKYTEYNEPHESGTNSDIVE) constitute a DNA-binding region (mef2-type). Ser-59 is subject to Phosphoserine; by CK2. Residues Ser-98 and Ser-235 each carry the phosphoserine modification. A disordered region spans residues 175-269 (ADSSMLSPPQ…GGGNLGMNSR (95 aa)). The span at 209 to 245 (LSTSDLTVPNGAGSSPVGNGFVNSRASPNLVGTTGAN) shows a compositional bias: polar residues. Lys-249 bears the N6-acetyllysine mark. Ser-255 carries the phosphoserine modification. Positions 266–283 (MNSRKPDLRVVIPPSSKG) are required for interaction with MAPKs. The tract at residues 289-296 (SEEEELEL) is beta domain. Residues Thr-312 and Thr-319 each carry the phosphothreonine; by MAPK7 and MAPK14 modification. Ser-355 carries the post-translational modification Phosphoserine; by MAPK7. The segment covering 390–402 (SNLSINTNQNINI) has biased composition (polar residues). Residues 390–507 (SNLSINTNQN…KRMRMDAWVT (118 aa)) are disordered. Residue Lys-403 is modified to N6-acetyllysine; alternate. Lys-403 participates in a covalent cross-link: Glycyl lysine isopeptide (Lys-Gly) (interchain with G-Cter in SUMO); alternate. At Ser-408 the chain carries Phosphoserine; by CDK5. Thr-415 carries the post-translational modification Phosphothreonine. Over residues 423 to 443 (QPPPPSQAPQPQPPQPQPQPQ) the composition is skewed to pro residues. Ser-453 bears the Phosphoserine mark. The span at 453-466 (SPVDSLSSSSSSYD) shows a compositional bias: low complexity. Composition is skewed to basic and acidic residues over residues 467-477 (GSDREDPRGDF) and 488-507 (NTEDRESPSVKRMRMDAWVT).

It belongs to the MEF2 family. Binds DNA as a homo- or heterodimer. Dimerizes with MEF2D. Interacts with HDAC7. Interacts with PIAS1; the interaction enhances sumoylation. Interacts with HDAC4, HDAC9 and SLC2A4RG. Interacts (via the N-terminal) with MAPK7; the interaction results in the phosphorylation and transcriptional activity of MEF2A. Constitutive phosphorylation on Ser-408 promotes Lys-403 sumoylation thus preventing acetylation at this site. Dephosphorylation on Ser-408 by PPP3CA upon neuron depolarization promotes a switch from sumoylation to acetylation on residue Lys-403 leading to inhibition of dendrite claw differentiation. Phosphorylation on Thr-312 and Thr-319 are the main sites involved in p38 MAPK signaling and activate transcription. Phosphorylated on these sites by MAPK14/p38alpha and MAPK11/p38beta, but not by MAPK13/p38delta nor by MAPK12/p38gamma. Phosphorylation on Ser-408 by CDK5 induced by neurotoxicity inhibits MEF2A transcriptional activation leading to apoptosis of cortical neurons. Phosphorylation on Thr-312, Thr-319 and Ser-355 can be induced by EGF. In terms of processing, sumoylation on Lys-403 is enhanced by PIAS1 and represses transcriptional activity. Phosphorylation on Ser-408 is required for sumoylation. Has no effect on nuclear location nor on DNA binding. Sumoylated with SUMO1 and, to a lesser extent with SUMO2 and SUMO3. PIASx facilitates sumoylation in postsynaptic dendrites in the cerebellar cortex and promotes their morphogenesis. Post-translationally, acetylation on Lys-403 activates transcriptional activity. Acetylated by p300 on several sites in diffentiating myocytes. Acetylation on Lys-4 increases DNA binding and transactivation. Hyperacetylation by p300 leads to enhanced cardiac myocyte growth and heart failure. Proteolytically cleaved on several sites by caspase 3 and caspase 7 following neurotoxicity. Preferentially cleaves the CDK5-mediated hyperphosphorylated form which leads to cortical neuron apoptosis and transcriptional inactivation.

It is found in the nucleus. Its function is as follows. Transcriptional activator which binds specifically to the MEF2 element, 5'-YTA[AT](4)TAR-3', found in numerous muscle-specific genes. Also involved in the activation of numerous growth factor- and stress-induced genes. Mediates cellular functions not only in skeletal and cardiac muscle development, but also in neuronal differentiation and survival. Plays diverse roles in the control of cell growth, survival and apoptosis via p38 MAPK signaling in muscle-specific and/or growth factor-related transcription. In cerebellar granule neurons, phosphorylated and sumoylated MEF2A represses transcription of NUR77 promoting synaptic differentiation. Associates with chromatin to the ZNF16 promoter. This Sus scrofa (Pig) protein is Myocyte-specific enhancer factor 2A (MEF2A).